Reading from the N-terminus, the 160-residue chain is Glyoxalase domain-containing protein 5 (160 aa).

The VOC domain occupies 37–157 (RLDHIVMTVK…DRNLIEVSNY (121 aa)).

The protein belongs to the glyoxalase I family.

The protein is Glyoxalase domain-containing protein 5 (GLOD5) of Homo sapiens (Human).